The following is a 440-amino-acid chain: 6-phospho-alpha-glucosidase (440 aa).

4 to 70 (FSVVIAGGGS…PEIEFSYTTD (67 aa)) contributes to the NAD(+) binding site. The substrate site is built by R93 and N147. C169 is a Mn(2+) binding site. Residue D170 is the Proton donor of the active site. H200 is a binding site for Mn(2+). The active-site Proton acceptor is the Y263. A substrate-binding site is contributed by R283.

Homodimer. NAD(+) is required as a cofactor. Mn(2+) serves as cofactor. It depends on Co(2+) as a cofactor. Requires Ni(2+) as cofactor.

It carries out the reaction alpha-maltose 6'-phosphate + H2O = D-glucose 6-phosphate + D-glucose. The protein operates within glycan biosynthesis; sucrose metabolism. Is involved in the catabolism of alpha-glycosides accumulated via a phosphoenolpyruvate-dependent phosphotransferase system (PEP-PTS). Hydrolyzes a wide variety of 6-phospho-alpha-D-glucosides including maltose-6'-phosphate, isomaltose-6'-phosphate, maltitol-6-phosphate, trehalose-6-phosphate and the 6'-phosphorylated derivatives of the five linkage-isomeric alpha-D-glucosyl-D-fructoses: trehalulose-6'-phosphate, turanose-6'-phosphate, maltulose-6'-phosphate, leucrose-6'-phosphate, and palatinose-6'-phosphate. However, sucrose-6-phosphate is not a substrate for this enzyme. The chain is 6-phospho-alpha-glucosidase from Klebsiella pneumoniae.